The following is a 229-amino-acid chain: MSTSSLIVAMDGPSGTGKSSVSRMLARRLGARYLDTGAMYRIATLHVLRKGVDLADPDAIADATVGLPWSIGTDPAGEQVLLDGEDVGEEIRGDAVTKAVSAVSAVPAVRELLVAAQRRLACEAGRIVVEGRDIGTVVLPDADVKIYLTASAEARAQRRNAQNLAEGRGDDFAAVLADVQRRDHLDSTRAVSPLRPADDSVLVDTSELGIDDVIGRLLLVVSERSGVGQ.

12–20 (GPSGTGKSS) provides a ligand contact to ATP.

Belongs to the cytidylate kinase family. Type 1 subfamily.

It is found in the cytoplasm. The enzyme catalyses CMP + ATP = CDP + ADP. The catalysed reaction is dCMP + ATP = dCDP + ADP. This is Cytidylate kinase from Rhodococcus opacus (strain B4).